A 498-amino-acid chain; its full sequence is MASNTVYTSLIGLLVALTVRSIYRVYFHPLRKIPGPKIAAITHLYQHYYDAVKGGKYIWKLDELHRKYGPIVRFNPNEVHIQDSHYYHHIYAGGAKKQDKDPGFPAVPLFPGVTVTTIKHNHHRLRRGIIKSFFSKQYVTGLEHVIQSKVNLLASRFTEAYRHGTVLDLKYVFAALTSDLTTHYVYGTNLNHLAEPDFKNDFLAGMDSVGPWIPVLLVFGRLLKLARYLPACLVPAGEFLHLWTLSERRVGEILDSQDNGTMGDQKTLLQAMATADVSEEEKTATRLQMETLNIIAGGTETTARALAVGVFHLAHKPSLLLQLRDELRTVMPFPDSSASWTQLEQLPYLAGVVNESLRLSFGFIIRSARVYPNDPLVYEDLVIPPGTPISQSAYFVCMDPSIFPQPEDFNPDRWVQAAREGNNLHRYLIVFSKGSRHCLGINFALAEIYLAIATIARRFDLVPYQTTVEQLQMKRDLGFAAPEKGPFTVRAKVTGLAD.

A helical transmembrane segment spans residues 5-27; it reads TVYTSLIGLLVALTVRSIYRVYF. Residues asparagine 259 and asparagine 354 are each glycosylated (N-linked (GlcNAc...) asparagine). Cysteine 438 is a binding site for heme.

This sequence belongs to the cytochrome P450 family. Requires heme as cofactor.

It is found in the membrane. It functions in the pathway mycotoxin biosynthesis; aflatoxin biosynthesis. Functionally, cytochrome P450 monooxygenase; part of the gene cluster that mediates the biosynthesis of aflatoxins, a group of polyketide-derived furanocoumarins, and part of the most toxic and carcinogenic compounds among the known mycotoxins. The four major aflatoxins produced by A.parasiticus are aflatoxin B1 (AFB1), aflatoxin B2 (AFB2), aflatoxin G1 (AFG1) and aflatoxin G2 (AFG2). Within the aflatoxin pathway, the cytochrome P450 monooxygenase aflU is involved in the last steps in which OMST is converted to aflatoxins B1 and G1, and DHOMST to aflatoxins B2 and G2. The biosynthesis of aflatoxins begins with the norsolorinic acid synthase aflC that combines a hexanoyl starter unit produced by the fatty acid synthase aflA/aflB and 7 malonyl-CoA extender units to synthesize the precursor NOR. The second step is the conversion of NOR to averantin and requires the norsolorinic acid ketoreductase aflD, which catalyzes the dehydration of norsolorinic acid to form (1'S)-averantin. The norsolorinic acid reductases aflE and aflF may also play a role in the conversion of NOR to AVN. The cytochrome P450 monooxygenase aflG then catalyzes the hydroxylation of AVN to 5'hydroxyaverantin (HAVN). The next step is performed by the 5'-hydroxyaverantin dehydrogenase aflH that transforms HAVN to 5'-oxoaverantin (OAVN) which is further converted to averufin (AVF) by aflK that plays a dual role in the pathway, as a 5'-oxoaverantin cyclase that mediates conversion of 5'-oxoaverantin, as well as a versicolorin B synthase in a later step in the pathway. The averufin oxidase aflI catalyzes the conversion of AVF to versiconal hemiacetal acetate (VHA). VHA is then the substrate for the versiconal hemiacetal acetate esterase aflJ to yield versiconal (VAL). Versicolorin B synthase aflK then converts VAL to versicolorin B (VERB) by closing the bisfuran ring of aflatoxin which is required for DNA-binding, thus giving to aflatoxin its activity as a mutagen. Then, the activity of the versicolorin B desaturase aflL leads to versicolorin A (VERA). A branch point starts from VERB since it can also be converted to dihydrodemethylsterigmatocystin (DMDHST), probably also by aflL, VERA being a precursor for aflatoxins B1 and G1, and DMDHST for aflatoxins B2 and G2. Next, the versicolorin reductase aflM and the cytochrome P450 monooxygenase aflN are involved in conversion of VERA to demethylsterigmatocystin (DMST). AflX and aflY seem also involved in this step, through probable aflX-mediated epoxide ring-opening step following versicolorin A oxidation and aflY-mediated Baeyer-Villiger oxidation required for the formation of the xanthone ring. The methyltransferase aflO then leads to the modification of DMST to sterigmatocystin (ST), and of DMDHST to dihydrosterigmatocystin (DHST). Both ST and DHST are then substrates of the O-methyltransferase aflP to yield O-methylsterigmatocystin (OMST) and dihydro-O-methylsterigmatocystin (DHOMST), respectively. Finally OMST is converted to aflatoxins B1 and G1, and DHOMST to aflatoxins B2 and G2, via the action of several enzymes including O-methylsterigmatocystin oxidoreductase aflQ, the cytochrome P450 monooxygenase aflU, but also the NADH-dependent flavin oxidoreductase nadA which is specifically required for the synthesis of AFG1. The sequence is that of Cytochrome P450 monooxygenase aflU from Aspergillus parasiticus (strain ATCC 56775 / NRRL 5862 / SRRC 143 / SU-1).